The chain runs to 343 residues: GTPase Obg (343 aa).

In terms of domain architecture, Obg spans 1 to 159 (MKFLDQAKVY…LNIWLRLKLI (159 aa)). Residues 160–327 (ADAGLVGLPN…VLRALMTVIA (168 aa)) enclose the OBG-type G domain. Residues 166–173 (GLPNAGKS), 191–195 (FTTLH), 212–215 (DIPG), 279–282 (SQVD), and 308–310 (SAV) each bind GTP. Mg(2+) is bound by residues serine 173 and threonine 193.

Belongs to the TRAFAC class OBG-HflX-like GTPase superfamily. OBG GTPase family. In terms of assembly, monomer. Mg(2+) serves as cofactor.

It is found in the cytoplasm. In terms of biological role, an essential GTPase which binds GTP, GDP and possibly (p)ppGpp with moderate affinity, with high nucleotide exchange rates and a fairly low GTP hydrolysis rate. Plays a role in control of the cell cycle, stress response, ribosome biogenesis and in those bacteria that undergo differentiation, in morphogenesis control. The sequence is that of GTPase Obg from Mesorhizobium japonicum (strain LMG 29417 / CECT 9101 / MAFF 303099) (Mesorhizobium loti (strain MAFF 303099)).